Reading from the N-terminus, the 127-residue chain is Anti-adapter protein IraD (127 aa).

Belongs to the GpW/Gp25 family. IraD subfamily. In terms of assembly, interacts with RssB.

The protein localises to the cytoplasm. Functionally, inhibits RpoS proteolysis by regulating RssB activity, thereby increasing the stability of the sigma stress factor RpoS during oxidative stress. Its effect on RpoS stability is due to its interaction with RssB, which probably blocks the interaction of RssB with RpoS, and the consequent delivery of the RssB-RpoS complex to the ClpXP protein degradation pathway. The sequence is that of Anti-adapter protein IraD from Escherichia coli (strain UTI89 / UPEC).